Reading from the N-terminus, the 153-residue chain is Glucose-6-phosphate 1-dehydrogenase (153 aa).

2 residues coordinate NADP(+): R21 and K120. K120 contacts D-glucose 6-phosphate.

This sequence belongs to the glucose-6-phosphate dehydrogenase family.

Its subcellular location is the cytoplasm. It localises to the cytosol. It carries out the reaction D-glucose 6-phosphate + NADP(+) = 6-phospho-D-glucono-1,5-lactone + NADPH + H(+). Its pathway is carbohydrate degradation; pentose phosphate pathway; D-ribulose 5-phosphate from D-glucose 6-phosphate (oxidative stage): step 1/3. Its function is as follows. Cytosolic glucose-6-phosphate dehydrogenase that catalyzes the first and rate-limiting step of the oxidative branch within the pentose phosphate pathway/shunt, an alternative route to glycolysis for the dissimilation of carbohydrates and a major source of reducing power and metabolic intermediates for fatty acid and nucleic acid biosynthetic processes. This chain is Glucose-6-phosphate 1-dehydrogenase (ZW), found in Culex pipiens (House mosquito).